A 367-amino-acid polypeptide reads, in one-letter code: MVMEVGILDAGGLRALLREGAAQCLLLDCRSFFAFNAGHIAGSVNVRFSTIVRRRAKGAMGLEHIVPNAELRGRLLAGAYHAVVLLDERSASLDGAKRDGTLALAAGALCREARSTQVFFLQGGYEAFSASCPELCSKQSTPTGLSLPLSTSVPDSAESGCSSCSTPLYDQGGPVEILSFLYLGSAYHASRKDMLDALGITALINVSANCPNHFEGHYQYKSIPVEDNHKADISSWFNEAIDFIDSIKDAGGRVFVHCQAGISRSATICLAYLMRTNRVKLDEAFEFVKQRRSIISPNFSFMGQLLQFESQVLAPHCSAEAGSPAMAVLDRGTSTTTVFNFPVSIPVHPTNSALNYLKSPITTSPSC.

Positions 20-137 constitute a Rhodanese domain; it reads GAAQCLLLDC…FSASCPELCS (118 aa). The region spanning 173–314 is the Tyrosine-protein phosphatase domain; sequence GPVEILSFLY…LLQFESQVLA (142 aa). C258 functions as the Phosphocysteine intermediate in the catalytic mechanism. S359 and S364 each carry phosphoserine; by MAPK1 and MAPK3.

It belongs to the protein-tyrosine phosphatase family. Non-receptor class dual specificity subfamily. Post-translationally, phosphorylation at Ser-359 and Ser-364 by MAPK1/ERK2 and MAPK3/ERK1 reduces its rate of degradation. In terms of processing, 'Lys-48'-linked polyubiquitinated by NEURL3, leading to proteasomal degradation.

The protein resides in the nucleus. It catalyses the reaction O-phospho-L-tyrosyl-[protein] + H2O = L-tyrosyl-[protein] + phosphate. The enzyme catalyses O-phospho-L-seryl-[protein] + H2O = L-seryl-[protein] + phosphate. It carries out the reaction O-phospho-L-threonyl-[protein] + H2O = L-threonyl-[protein] + phosphate. Dual specificity phosphatase that dephosphorylates MAP kinase MAPK1/ERK2 on both 'Thr-183' and 'Tyr-185', regulating its activity during the meiotic cell cycle. This chain is Dual specificity protein phosphatase 1, found in Mus musculus (Mouse).